Consider the following 187-residue polypeptide: Peptide deformylase (187 aa).

Fe cation-binding residues include C107 and H149. E150 is an active-site residue. Residue H153 coordinates Fe cation.

Belongs to the polypeptide deformylase family. Requires Fe(2+) as cofactor.

It carries out the reaction N-terminal N-formyl-L-methionyl-[peptide] + H2O = N-terminal L-methionyl-[peptide] + formate. Its function is as follows. Removes the formyl group from the N-terminal Met of newly synthesized proteins. Requires at least a dipeptide for an efficient rate of reaction. N-terminal L-methionine is a prerequisite for activity but the enzyme has broad specificity at other positions. This is Peptide deformylase from Microchaete diplosiphon (Fremyella diplosiphon).